The following is a 189-amino-acid chain: MEKGEDPGSLIKVIHLLVLSGAWGMQVWVTFISGFLLFRSLPRHTFGLVQSKVFPVYFHVSLGCAFINLCILAPQRAWIHLTLWEVSQLSLLLLSLTLATINARWLEARTTAVMRALQSIEKERGLGTEVPGNFQGPDPYRQLRDKDPKYSALRRKFYHYHGLSSLCNLGCLLSNGLCLVGLALGLRSL.

The next 4 helical transmembrane spans lie at 18–38, 53–73, 81–101, and 166–186; these read VLSGAWGMQVWVTFISGFLLF, VFPVYFHVSLGCAFINLCILA, LTLWEVSQLSLLLLSLTLATI, and LCNLGCLLSNGLCLVGLALGL.

It belongs to the TMEM205 family.

The protein localises to the membrane. The sequence is that of Transmembrane protein 205 (Tmem205) from Mus musculus (Mouse).